The following is a 503-amino-acid chain: uncharacterized protein (503 aa).

Disordered stretches follow at residues 1 to 26 (MADD…SPTT) and 132 to 156 (DQQQ…DNSM). Positions 16–26 (AQSSVPTSPTT) are enriched in low complexity. Residues 147–156 (TPNSVDDNSM) are compositionally biased toward polar residues.

This is an uncharacterized protein from Caenorhabditis elegans.